Consider the following 480-residue polypeptide: MTRPLRLHPDRLFPADAGTRDIARRLYGSVKDLPIISPHGHTDPEWFAGDAPFPDATNLFLAPDHYLYRMLYSQGVPLDRLGVPSKAGPSPADPREAWRMLASNMHLFRGTPSSMWLNHVFGEVFGFEIELSAETADLYFDRIGEALQSPAFRPRALFERFNIELLATTESPTDDLRHHKAMRASGWKGRVVTAYRPDPVIDAEHEDFRASLSRFGELTGQDVESWSGYLQAHRMRRAAFMEMGATSTDHGHPTAATADLSLADAEALFRKLLSADFSPADAELFRAQMLTEMARMSLDDGLVMQIHPGSFRNHNAGLFARYGRDKGADIPTRTDYVRALKPLLDRFGNERGLSVIVFTLDESSYARELAPLAGHYPVLKLGPAWWFHDSPEGMRRFREQTTETAGFYNTVGFNDDTRAFLSIPARHDVARRIDAGFLARLVAEHRLSEDDAHETAVDLAYNLPKRAYKLDEPARTPAAA.

It belongs to the metallo-dependent hydrolases superfamily. Uronate isomerase family.

The enzyme catalyses D-glucuronate = D-fructuronate. It carries out the reaction aldehydo-D-galacturonate = keto-D-tagaturonate. Its pathway is carbohydrate metabolism; pentose and glucuronate interconversion. The sequence is that of Uronate isomerase from Phenylobacterium zucineum (strain HLK1).